The following is a 251-amino-acid chain: ATP synthase subunit a (251 aa).

Transmembrane regions (helical) follow at residues 28-48 (TDTV…AFFL), 84-104 (IAPF…ISNW), 130-150 (INYV…AGIW), 192-212 (IFAG…IMWA), and 220-240 (FDLF…ILYF).

It belongs to the ATPase A chain family. As to quaternary structure, F-type ATPases have 2 components, CF(1) - the catalytic core - and CF(0) - the membrane proton channel. CF(1) has five subunits: alpha(3), beta(3), gamma(1), delta(1), epsilon(1). CF(0) has three main subunits: a(1), b(2) and c(9-12). The alpha and beta chains form an alternating ring which encloses part of the gamma chain. CF(1) is attached to CF(0) by a central stalk formed by the gamma and epsilon chains, while a peripheral stalk is formed by the delta and b chains.

It localises to the cell membrane. Key component of the proton channel; it plays a direct role in the translocation of protons across the membrane. This chain is ATP synthase subunit a, found in Mycobacterium leprae (strain TN).